The chain runs to 259 residues: Hydroxyethylthiazole kinase 1 (259 aa).

Substrate is bound at residue M38. Residues R113 and S158 each contribute to the ATP site. Substrate is bound at residue G185.

It belongs to the Thz kinase family. It depends on Mg(2+) as a cofactor.

It catalyses the reaction 5-(2-hydroxyethyl)-4-methylthiazole + ATP = 4-methyl-5-(2-phosphooxyethyl)-thiazole + ADP + H(+). Its pathway is cofactor biosynthesis; thiamine diphosphate biosynthesis; 4-methyl-5-(2-phosphoethyl)-thiazole from 5-(2-hydroxyethyl)-4-methylthiazole: step 1/1. Catalyzes the phosphorylation of the hydroxyl group of 4-methyl-5-beta-hydroxyethylthiazole (THZ). This is Hydroxyethylthiazole kinase 1 from Leuconostoc mesenteroides subsp. mesenteroides (strain ATCC 8293 / DSM 20343 / BCRC 11652 / CCM 1803 / JCM 6124 / NCDO 523 / NBRC 100496 / NCIMB 8023 / NCTC 12954 / NRRL B-1118 / 37Y).